A 117-amino-acid chain; its full sequence is Large ribosomal subunit protein bL20 (117 aa).

The protein belongs to the bacterial ribosomal protein bL20 family.

Its function is as follows. Binds directly to 23S ribosomal RNA and is necessary for the in vitro assembly process of the 50S ribosomal subunit. It is not involved in the protein synthesizing functions of that subunit. The protein is Large ribosomal subunit protein bL20 of Streptococcus suis (strain 05ZYH33).